The chain runs to 226 residues: Small ribosomal subunit protein uS3 (226 aa).

A KH type-2 domain is found at 36-104 (IRKYLENRLS…KIQINIFEIK (69 aa)).

Belongs to the universal ribosomal protein uS3 family. Part of the 30S ribosomal subunit. Forms a tight complex with proteins S10 and S14.

Functionally, binds the lower part of the 30S subunit head. Binds mRNA in the 70S ribosome, positioning it for translation. This chain is Small ribosomal subunit protein uS3, found in Karelsulcia muelleri (strain GWSS) (Sulcia muelleri).